A 243-amino-acid polypeptide reads, in one-letter code: Ice-binding protein K3-B1 (243 aa).

The N-terminal stretch at 1–20 is a signal peptide; the sequence is MFSASSLLAVIALAISSVSA.

This sequence belongs to the ice-binding protein family.

In terms of biological role, binds to the surface of ice crystals. Has low thermal hysteresis (TH) activity, which is the ability to lower the freezing point of an aqueous solution below its melting point. The TH activity of this protein is approximately 0.3 degrees Celsius at 11 mM. The chain is Ice-binding protein K3-B1 from Typhula ishikariensis (Gray snow mold fungus).